We begin with the raw amino-acid sequence, 172 residues long: Mesogenin-1 (172 aa).

Positions 1 to 69 are disordered; that stretch reads METLHHPLVK…SPYSSSSHTQ (69 aa). Residues 18–29 show a composition bias toward polar residues; that stretch reads SSDSEPNSSCMA. The span at 42–66 shows a compositional bias: low complexity; it reads SLSQTPSPQSLSPAVSYESPYSSSS. A bHLH domain is found at 108–162; sequence QRRRKASEREKLRMRAIAEALHTLRNNLPPMYSQGRQPLTKIQTLKCTINYISEL.

The protein localises to the nucleus. Functionally, involved in specifying the paraxial, but not dorsal, mesoderm. May regulate the expression of T-box transcription factors required for mesoderm formation and differentiation, such as brachyury T, wnt8, vegt and eomes. The sequence is that of Mesogenin-1 (msgn1) from Xenopus tropicalis (Western clawed frog).